The following is a 118-amino-acid chain: Beta-2-microglobulin (118 aa).

The N-terminal stretch at 1–20 (MARVVALVLLGLLSLTGLEA) is a signal peptide. The Ig-like C1-type domain occupies 25 to 111 (PKVQVYSRHP…QHSTLKEPLI (87 aa)). An intrachain disulfide couples C45 to C99.

It belongs to the beta-2-microglobulin family. In terms of assembly, heterodimer of an alpha chain and a beta chain. Beta-2-microglobulin is the beta-chain of major histocompatibility complex class I molecules.

It is found in the secreted. In terms of biological role, component of the class I major histocompatibility complex (MHC). Involved in the presentation of peptide antigens to the immune system. The sequence is that of Beta-2-microglobulin (B2M) from Equus asinus (Donkey).